Here is a 191-residue protein sequence, read N- to C-terminus: UPF0312 protein PA0423 (191 aa).

An N-terminal signal peptide occupies residues 1–23; it reads MLKKTLAALALGSALFTAGQAMA.

It belongs to the UPF0312 family. Type 1 subfamily.

Its subcellular location is the periplasm. The protein is UPF0312 protein PA0423 of Pseudomonas aeruginosa (strain ATCC 15692 / DSM 22644 / CIP 104116 / JCM 14847 / LMG 12228 / 1C / PRS 101 / PAO1).